A 264-amino-acid polypeptide reads, in one-letter code: Acyl-[acyl-carrier-protein]--UDP-N-acetylglucosamine O-acyltransferase (264 aa).

This sequence belongs to the transferase hexapeptide repeat family. LpxA subfamily. Homotrimer.

Its subcellular location is the cytoplasm. The catalysed reaction is a (3R)-hydroxyacyl-[ACP] + UDP-N-acetyl-alpha-D-glucosamine = a UDP-3-O-[(3R)-3-hydroxyacyl]-N-acetyl-alpha-D-glucosamine + holo-[ACP]. Its pathway is glycolipid biosynthesis; lipid IV(A) biosynthesis; lipid IV(A) from (3R)-3-hydroxytetradecanoyl-[acyl-carrier-protein] and UDP-N-acetyl-alpha-D-glucosamine: step 1/6. Involved in the biosynthesis of lipid A, a phosphorylated glycolipid that anchors the lipopolysaccharide to the outer membrane of the cell. This is Acyl-[acyl-carrier-protein]--UDP-N-acetylglucosamine O-acyltransferase from Rickettsia typhi (strain ATCC VR-144 / Wilmington).